Reading from the N-terminus, the 334-residue chain is Ornithine carbamoyltransferase (334 aa).

Carbamoyl phosphate contacts are provided by residues 57–60 (STRT), Gln84, Arg108, and 135–138 (HPTQ). Residues Asn169, Asp233, and 237–238 (SM) contribute to the L-ornithine site. Carbamoyl phosphate contacts are provided by residues 275 to 276 (CL) and Arg320.

The protein belongs to the aspartate/ornithine carbamoyltransferase superfamily. OTCase family.

The protein localises to the cytoplasm. The enzyme catalyses carbamoyl phosphate + L-ornithine = L-citrulline + phosphate + H(+). The protein operates within amino-acid biosynthesis; L-arginine biosynthesis; L-arginine from L-ornithine and carbamoyl phosphate: step 1/3. In terms of biological role, reversibly catalyzes the transfer of the carbamoyl group from carbamoyl phosphate (CP) to the N(epsilon) atom of ornithine (ORN) to produce L-citrulline. This is Ornithine carbamoyltransferase from Vibrio cholerae serotype O1 (strain ATCC 39315 / El Tor Inaba N16961).